Consider the following 455-residue polypeptide: Beta-glucosidase A (455 aa).

Glutamate 165 (proton donor) is an active-site residue. Catalysis depends on glutamate 363, which acts as the Nucleophile.

This sequence belongs to the glycosyl hydrolase 1 family.

It catalyses the reaction Hydrolysis of terminal, non-reducing beta-D-glucosyl residues with release of beta-D-glucose.. The polypeptide is Beta-glucosidase A (bglA) (Caldicellulosiruptor saccharolyticus (Caldocellum saccharolyticum)).